The following is an 802-amino-acid chain: Chromosome alignment-maintaining phosphoprotein 1 (802 aa).

M1 carries the N-acetylmethionine modification. Basic and acidic residues predominate over residues 88–105 (SDKWSEQPKEQPSKDTES). The segment at 88–475 (SDKWSEQPKE…PDLWKSSFIM (388 aa)) is disordered. S108 bears the Phosphoserine mark. The span at 135-148 (QKTSPSLCPESQAS) shows a compositional bias: polar residues. The span at 185–203 (ERVDPPCELPELEKPERGP) shows a compositional bias: basic and acidic residues. 15 positions are modified to phosphoserine: S204, S207, S234, S237, S243, S252, S254, S265, S272, S276, S298, S309, S334, S345, and S365. The mediates interaction with MAD2L2 stretch occupies residues 261 to 479 (ARTASPEPRK…KSSFIMESQK (219 aa)). The segment covering 332–351 (PMSPGPWKPIPSVSPGPWKP) has biased composition (pro residues). The span at 354–368 (SMSTASWKSSVSSGS) shows a compositional bias: low complexity. Residues 369 to 378 (WKTPPTSPES) are compositionally biased toward polar residues. At T371 the chain carries Phosphothreonine. 9 positions are modified to phosphoserine: S375, S394, S405, S416, S421, S425, S432, S434, and S441. The mediates localization to the spindle and the kinetochore and is required for the attachment of spindle microtubules to the kinetochore stretch occupies residues 440 to 580 (VSPDQRKTSP…EIQLEAVDNA (141 aa)). A Phosphothreonine modification is found at T447. Phosphoserine occurs at positions 448, 451, and 461. Position 479 is an N6-acetyllysine; alternate (K479). K479 participates in a covalent cross-link: Glycyl lysine isopeptide (Lys-Gly) (interchain with G-Cter in SUMO2); alternate. 3 positions are modified to phosphoserine: S497, S502, and S532. Residue K555 forms a Glycyl lysine isopeptide (Lys-Gly) (interchain with G-Cter in SUMO2) linkage. The tract at residues 581–802 (KCDSLAQEGL…LESPLEEQQI (222 aa)) is mediates localization to the chromosome and the spindle and negatively regulates chromosome alignment. Residue T593 is modified to Phosphothreonine. K596 is covalently cross-linked (Glycyl lysine isopeptide (Lys-Gly) (interchain with G-Cter in SUMO2)). Residues S603, S605, S617, S622, S641, S642, and S643 each carry the phosphoserine modification. The disordered stretch occupies residues 603 to 625 (SPSSKKLKKDSQENSDAELSSSE). A Glycyl lysine isopeptide (Lys-Gly) (interchain with G-Cter in SUMO2) cross-link involves residue K660. S665 is subject to Phosphoserine. K679 is covalently cross-linked (Glycyl lysine isopeptide (Lys-Gly) (interchain with G-Cter in SUMO2)). Phosphoserine is present on S726. The segment at 728-750 (YKCTICGKAFLLESLLKNHVAAH) adopts a C2H2-type zinc-finger fold.

In terms of assembly, interacts with MAD2L2. Interacts with POGZ, CBX1, CBX3 and CBX5. Post-translationally, phosphorylated by CDK1. Mitotic phosphorylation is required for the attachment of spindle microtubules to the kinetochore.

Its subcellular location is the nucleus. It is found in the chromosome. The protein localises to the centromere. It localises to the kinetochore. The protein resides in the cytoplasm. Its subcellular location is the cytoskeleton. It is found in the spindle. Its function is as follows. Required for proper alignment of chromosomes at metaphase and their accurate segregation during mitosis. Involved in the maintenance of spindle microtubules attachment to the kinetochore during sister chromatid biorientation. May recruit CENPE and CENPF to the kinetochore. The polypeptide is Chromosome alignment-maintaining phosphoprotein 1 (Champ1) (Mus musculus (Mouse)).